An 810-amino-acid polypeptide reads, in one-letter code: Exocyst complex component 6B (810 aa).

A coiled-coil region spans residues threonine 79–glutamine 118. The disordered stretch occupies residues glutamate 258–valine 282. Acidic residues predominate over residues aspartate 272–valine 282.

It belongs to the SEC15 family. In terms of assembly, the exocyst complex is composed of SEC3, SEC5, SEC6, SEC8, SEC10, SEC15, EXO70 and EXO84.

Its function is as follows. Component of the exocyst complex involved in the docking of exocytic vesicles with fusion sites on the plasma membrane. This Mus musculus (Mouse) protein is Exocyst complex component 6B (Exoc6b).